The sequence spans 333 residues: Large ribosomal subunit protein mL39 (333 aa).

Residues 56–122 (DKIEVRYLGL…QESCTLQLLN (67 aa)) form the TGS domain. The interval 311–333 (SKKPSPARLPNEPFEEQQQLQLS) is disordered.

This sequence belongs to the mitochondrion-specific ribosomal protein mL39 family. In terms of assembly, component of the mitochondrial ribosome large subunit (39S) which comprises a 16S rRNA and about 50 distinct proteins.

The protein resides in the mitochondrion. In Drosophila melanogaster (Fruit fly), this protein is Large ribosomal subunit protein mL39 (mRpL39).